Consider the following 142-residue polypeptide: Nucleoside diphosphate kinase (142 aa).

Residues Lys-11, Phe-59, Arg-87, Thr-93, Arg-104, and Asn-114 each coordinate ATP. His-117 functions as the Pros-phosphohistidine intermediate in the catalytic mechanism.

The protein belongs to the NDK family. As to quaternary structure, homotetramer. Mg(2+) is required as a cofactor.

The protein resides in the cytoplasm. The enzyme catalyses a 2'-deoxyribonucleoside 5'-diphosphate + ATP = a 2'-deoxyribonucleoside 5'-triphosphate + ADP. The catalysed reaction is a ribonucleoside 5'-diphosphate + ATP = a ribonucleoside 5'-triphosphate + ADP. Its function is as follows. Major role in the synthesis of nucleoside triphosphates other than ATP. The ATP gamma phosphate is transferred to the NDP beta phosphate via a ping-pong mechanism, using a phosphorylated active-site intermediate. This is Nucleoside diphosphate kinase from Pectobacterium atrosepticum (strain SCRI 1043 / ATCC BAA-672) (Erwinia carotovora subsp. atroseptica).